The sequence spans 420 residues: ATP phosphoribosyltransferase regulatory subunit (420 aa).

The protein belongs to the class-II aminoacyl-tRNA synthetase family. HisZ subfamily. As to quaternary structure, heteromultimer composed of HisG and HisZ subunits.

Its subcellular location is the cytoplasm. It functions in the pathway amino-acid biosynthesis; L-histidine biosynthesis; L-histidine from 5-phospho-alpha-D-ribose 1-diphosphate: step 1/9. In terms of biological role, required for the first step of histidine biosynthesis. May allow the feedback regulation of ATP phosphoribosyltransferase activity by histidine. The protein is ATP phosphoribosyltransferase regulatory subunit of Bacillus cereus (strain B4264).